A 378-amino-acid chain; its full sequence is ATP phosphoribosyltransferase regulatory subunit (378 aa).

It belongs to the class-II aminoacyl-tRNA synthetase family. HisZ subfamily. As to quaternary structure, heteromultimer composed of HisG and HisZ subunits.

Its subcellular location is the cytoplasm. The protein operates within amino-acid biosynthesis; L-histidine biosynthesis; L-histidine from 5-phospho-alpha-D-ribose 1-diphosphate: step 1/9. Its function is as follows. Required for the first step of histidine biosynthesis. May allow the feedback regulation of ATP phosphoribosyltransferase activity by histidine. The protein is ATP phosphoribosyltransferase regulatory subunit of Brucella abortus (strain 2308).